We begin with the raw amino-acid sequence, 253 residues long: Flap endonuclease Xni (253 aa).

Residue D104 coordinates Mg(2+). Residues 160–250 form the 5'-3' exonuclease domain; that stretch reads VAPQQLTDFW…HGNLQQLRLN (91 aa). The K(+) site is built by L171, A172, P180, I182, and I185. Residues 184 to 189 form an interaction with DNA region; it reads GIGAKT.

This sequence belongs to the Xni family. Mg(2+) is required as a cofactor. K(+) serves as cofactor.

In terms of biological role, has flap endonuclease activity. During DNA replication, flap endonucleases cleave the 5'-overhanging flap structure that is generated by displacement synthesis when DNA polymerase encounters the 5'-end of a downstream Okazaki fragment. The protein is Flap endonuclease Xni of Edwardsiella ictaluri (strain 93-146).